Consider the following 88-residue polypeptide: Small ribosomal subunit protein uS15 (88 aa).

The protein belongs to the universal ribosomal protein uS15 family. Part of the 30S ribosomal subunit. Forms a bridge to the 50S subunit in the 70S ribosome, contacting the 23S rRNA.

Its function is as follows. One of the primary rRNA binding proteins, it binds directly to 16S rRNA where it helps nucleate assembly of the platform of the 30S subunit by binding and bridging several RNA helices of the 16S rRNA. In terms of biological role, forms an intersubunit bridge (bridge B4) with the 23S rRNA of the 50S subunit in the ribosome. This Desulfitobacterium hafniense (strain Y51) protein is Small ribosomal subunit protein uS15.